Consider the following 308-residue polypeptide: L-lactate dehydrogenase 2 (308 aa).

NAD(+)-binding positions include valine 13, aspartate 34, arginine 39, tyrosine 64, and 78-79 (GV). Arginine 87 lines the substrate pocket. NAD(+) is bound at residue threonine 100. 119–122 (NPVD) contributes to the substrate binding site. Threonine 142 lines the NAD(+) pocket. Substrate is bound at residue 147–150 (DSMR). The active-site Proton acceptor is the histidine 174. Threonine 224 is a binding site for substrate.

The protein belongs to the LDH/MDH superfamily. LDH family. As to quaternary structure, homotetramer.

It localises to the cytoplasm. The catalysed reaction is (S)-lactate + NAD(+) = pyruvate + NADH + H(+). Its pathway is fermentation; pyruvate fermentation to lactate; (S)-lactate from pyruvate: step 1/1. Catalyzes the conversion of lactate to pyruvate. This chain is L-lactate dehydrogenase 2, found in Lactobacillus acidophilus (strain ATCC 700396 / NCK56 / N2 / NCFM).